Here is a 194-residue protein sequence, read N- to C-terminus: NADH-quinone oxidoreductase subunit B 1 (194 aa).

Polar residues predominate over residues 1–12 (MGVTPVSNQPLV). The interval 1-23 (MGVTPVSNQPLVAQQPKGIIDPS) is disordered. 4 residues coordinate [4Fe-4S] cluster: Cys73, Cys74, Cys138, and Cys168.

It belongs to the complex I 20 kDa subunit family. As to quaternary structure, NDH-1 is composed of 14 different subunits. Subunits NuoB, C, D, E, F, and G constitute the peripheral sector of the complex. [4Fe-4S] cluster serves as cofactor.

It is found in the cell inner membrane. It carries out the reaction a quinone + NADH + 5 H(+)(in) = a quinol + NAD(+) + 4 H(+)(out). Functionally, NDH-1 shuttles electrons from NADH, via FMN and iron-sulfur (Fe-S) centers, to quinones in the respiratory chain. The immediate electron acceptor for the enzyme in this species is believed to be ubiquinone. Couples the redox reaction to proton translocation (for every two electrons transferred, four hydrogen ions are translocated across the cytoplasmic membrane), and thus conserves the redox energy in a proton gradient. The sequence is that of NADH-quinone oxidoreductase subunit B 1 from Rhizobium etli (strain ATCC 51251 / DSM 11541 / JCM 21823 / NBRC 15573 / CFN 42).